Here is a 958-residue protein sequence, read N- to C-terminus: Valine--tRNA ligase (958 aa).

The 'HIGH' region signature appears at Pro42 to His52. The 'KMSKS' region motif lies at Lys554–Ser558. Lys557 contacts ATP. Residues Leu887 to Leu956 adopt a coiled-coil conformation.

The protein belongs to the class-I aminoacyl-tRNA synthetase family. ValS type 1 subfamily. Monomer.

The protein resides in the cytoplasm. The enzyme catalyses tRNA(Val) + L-valine + ATP = L-valyl-tRNA(Val) + AMP + diphosphate. Functionally, catalyzes the attachment of valine to tRNA(Val). As ValRS can inadvertently accommodate and process structurally similar amino acids such as threonine, to avoid such errors, it has a 'posttransfer' editing activity that hydrolyzes mischarged Thr-tRNA(Val) in a tRNA-dependent manner. The protein is Valine--tRNA ligase of Shewanella oneidensis (strain ATCC 700550 / JCM 31522 / CIP 106686 / LMG 19005 / NCIMB 14063 / MR-1).